A 314-amino-acid polypeptide reads, in one-letter code: Secreted frizzled-related protein 1 (314 aa).

A signal peptide spans 1 to 31 (MGVGRSEGGRRGAALGVLLALGVALLAVGSA). The 117-residue stretch at 53-169 (TKPHQCVAIP…FPQDYVCIAM (117 aa)) folds into the FZ domain. 5 cysteine pairs are disulfide-bonded: cysteine 58–cysteine 121, cysteine 68–cysteine 114, cysteine 105–cysteine 140, cysteine 129–cysteine 166, and cysteine 133–cysteine 157. The N-linked (GlcNAc...) asparagine glycan is linked to asparagine 173. Cystine bridges form between cysteine 186–cysteine 256, cysteine 189–cysteine 258, and cysteine 203–cysteine 306. Residues 186–306 (CPPCDNEMKS…FMKKVKAPDC (121 aa)) enclose the NTR domain.

This sequence belongs to the secreted frizzled-related protein (sFRP) family.

The protein localises to the secreted. Its function is as follows. Soluble frizzled-related proteins (sFRPS) function as modulators of Wnt signaling through direct interaction with Wnts. They have a role in regulating cell growth and differentiation in specific cell types. This Gallus gallus (Chicken) protein is Secreted frizzled-related protein 1 (SFRP1).